The primary structure comprises 185 residues: UPF0200 protein Mevan_0592 (185 aa).

An ATP-binding site is contributed by glycine 8–serine 15.

The protein belongs to the UPF0200 family.

The protein is UPF0200 protein Mevan_0592 of Methanococcus vannielii (strain ATCC 35089 / DSM 1224 / JCM 13029 / OCM 148 / SB).